The chain runs to 265 residues: Undecaprenyl-diphosphatase (265 aa).

7 helical membrane-spanning segments follow: residues 42–62 (AATF…VLYW), 82–102 (GIVL…LLHA), 108–128 (LFRP…MILV), 157–177 (LALW…MLLG), 181–201 (PLAA…ATGY), 217–237 (FFLV…KVFV), and 244–264 (TLIP…YFMV).

It belongs to the UppP family.

It localises to the cell inner membrane. The catalysed reaction is di-trans,octa-cis-undecaprenyl diphosphate + H2O = di-trans,octa-cis-undecaprenyl phosphate + phosphate + H(+). Catalyzes the dephosphorylation of undecaprenyl diphosphate (UPP). Confers resistance to bacitracin. The protein is Undecaprenyl-diphosphatase of Desulfovibrio desulfuricans (strain ATCC 27774 / DSM 6949 / MB).